Consider the following 378-residue polypeptide: MTTATGKVNLLGLTQPQLEQFFESIGEKRFRAGQVMKWIHHFGVDDFDAMTNVGKALREKLKAFAEIRGPEIVSQDISADGTRKWVVRVASGSCVETVYIPQGGRGTLCVSSQAGCALDCSFCSTGKQGFNSDLSAAEVIGQVWIANKSFGTVPAKIDRAITNVVMMGMGEPLLNFDNVVAAMNIMMDDLGYGISKRKVTLSTSGVVPMIDKLGEVIDVSLALSLHAPNDELRNRLVPINKKYPLTMLLDACRRYISRLGEKRVLTVEYTLLKDVNDQPEHAEQMIALLKDTPCKINLIPFNPFPHSGYERPSNNAIRRFQDLLHKGGFNVTVRTTRGDDIDAACGQLVGQVMDRTRRSERYIAVRQLAESESAANRN.

Catalysis depends on glutamate 96, which acts as the Proton acceptor. Positions glutamine 102–aspartate 342 constitute a Radical SAM core domain. Cysteine 109 and cysteine 345 form a disulfide bridge. The [4Fe-4S] cluster site is built by cysteine 116, cysteine 120, and cysteine 123. S-adenosyl-L-methionine contacts are provided by residues glycine 170 to glutamate 171, serine 202, serine 224 to histidine 226, and asparagine 302. The active-site S-methylcysteine intermediate is cysteine 345.

It belongs to the radical SAM superfamily. RlmN family. Requires [4Fe-4S] cluster as cofactor.

It localises to the cytoplasm. The catalysed reaction is adenosine(2503) in 23S rRNA + 2 reduced [2Fe-2S]-[ferredoxin] + 2 S-adenosyl-L-methionine = 2-methyladenosine(2503) in 23S rRNA + 5'-deoxyadenosine + L-methionine + 2 oxidized [2Fe-2S]-[ferredoxin] + S-adenosyl-L-homocysteine. The enzyme catalyses adenosine(37) in tRNA + 2 reduced [2Fe-2S]-[ferredoxin] + 2 S-adenosyl-L-methionine = 2-methyladenosine(37) in tRNA + 5'-deoxyadenosine + L-methionine + 2 oxidized [2Fe-2S]-[ferredoxin] + S-adenosyl-L-homocysteine. Specifically methylates position 2 of adenine 2503 in 23S rRNA and position 2 of adenine 37 in tRNAs. m2A2503 modification seems to play a crucial role in the proofreading step occurring at the peptidyl transferase center and thus would serve to optimize ribosomal fidelity. The chain is Dual-specificity RNA methyltransferase RlmN from Pseudomonas paraeruginosa (strain DSM 24068 / PA7) (Pseudomonas aeruginosa (strain PA7)).